The primary structure comprises 399 residues: F-box protein At1g30790 (399 aa).

The F-box domain maps to 3-49 (RQEIDHIPFDLTVEILTRLPAKSLMKFKCVSKLWSSIIHNQSFIDSF).

This is F-box protein At1g30790 from Arabidopsis thaliana (Mouse-ear cress).